Here is a 1685-residue protein sequence, read N- to C-terminus: PHD and RING finger domain-containing protein 1 (1685 aa).

A disordered region spans residues 1-82 (MDDDNLDELV…GSEDSEDGIE (82 aa)). Residues 41–81 (DSEDDTGSEQDDDTDGEETEGLSEEEDPEDRSGSEDSEDGI) show a composition bias toward acidic residues. The segment at 109-150 (CPICLNAFRDQAVGTPETCAHYFCLDCIIEWSRNANSCPVDR) adopts an RING-type; degenerate zinc-finger fold. The PHD-type zinc-finger motif lies at 188–238 (PTFCEVCGRSDREDRLLLCDGCDAGYHMECLDPPLQEVPVDEWFCPECAVP). Disordered stretches follow at residues 333-390 (PLTP…KLKN), 449-483 (DSNGEQSADPPSPLSAKRRVLSRSALQSHQPVARP), 537-590 (SAKR…GLSC), 606-777 (TPVR…GSSF), and 809-860 (KVQR…LLPS). Position 335 is a phosphothreonine (Thr-335). 2 stretches are compositionally biased toward basic residues: residues 339 to 364 (PAKRKRKAGRRKKVLGRKKTRSRSSV) and 372 to 387 (RAKKRQHRVRRTKGRK). Residues Ser-450 and Ser-460 each carry the phosphoserine modification. Composition is skewed to polar residues over residues 606-625 (TPVRSDSSVTPRSGLSGNLS) and 637-662 (SPRLNGSNVRVGSASTKTMTHSNFPS). Residues 671–682 (QKTDPRRPDFSK) show a composition bias toward basic and acidic residues. Polar residues-rich tracts occupy residues 694-709 (SNSTQDQAPASGQTVE) and 737-751 (SSRGPQETGSHTSGS). A phosphoserine mark is found at Ser-817, Ser-848, Ser-849, Ser-867, Ser-870, Ser-922, Ser-948, Ser-984, and Ser-1002. The span at 835–860 (PFDPTGSDSSPPSSSPESLGSGLLPS) shows a compositional bias: low complexity. 3 disordered regions span residues 892 to 1229 (GTEM…VSEV), 1290 to 1355 (QLDD…APSD), and 1369 to 1390 (TTLSTPGVLPMGKDSPLLSGRG). Residues 922 to 934 (SDLEQEGLGEIEP) are compositionally biased toward acidic residues. Residues 1001 to 1010 (SSRSRSTSSS) show a composition bias toward low complexity. Composition is skewed to basic residues over residues 1011–1031 (RSRKKTKKKKKVAREHQRTRS) and 1054–1064 (KRHRAKTKSRR). A compositionally biased stretch (basic and acidic residues) spans 1065-1075 (SSSDRASSQDR). Basic residues-rich tracts occupy residues 1089-1102 (GPWGHGRCWRKSRS) and 1117-1129 (SRRRKRRHSGSRS). Composition is skewed to basic and acidic residues over residues 1130 to 1143 (RGRDGSPHSSLERD) and 1151 to 1165 (RSRERMDKKESMTRS). Ser-1135 and Ser-1139 each carry phosphoserine. The span at 1181–1191 (RTRRPHSREKH) shows a compositional bias: basic residues. Basic and acidic residues predominate over residues 1192–1201 (PHSPEKKGAV). Ser-1205 carries the phosphoserine modification. Residues 1292–1305 (DDMSSPPSPESTDS) show a composition bias toward low complexity. 2 positions are modified to phosphoserine: Ser-1372 and Ser-1383. Thr-1416 is subject to Phosphothreonine. Disordered stretches follow at residues 1421-1448 (EAEASTPALDRDPRTPLQRPQRPQEGDW), 1466-1501 (LPPPIHVLQESGLPDADPSQPPGVPRAEGPPAVGTL), and 1569-1591 (LAVPTTNNSEERTATPKTAAEKT). Over residues 1577–1591 (SEERTATPKTAAEKT) the composition is skewed to basic and acidic residues. Residues 1589–1615 (EKTKKEEYMKKLHMQERAVEEVKLAIK) adopt a coiled-coil conformation.

In terms of assembly, interacts with POLR2A (via the C-terminal domain).

In Rattus norvegicus (Rat), this protein is PHD and RING finger domain-containing protein 1.